Reading from the N-terminus, the 114-residue chain is UPF0342 protein LCABL_19440 (114 aa).

It belongs to the UPF0342 family.

This Lacticaseibacillus casei (strain BL23) (Lactobacillus casei) protein is UPF0342 protein LCABL_19440.